The sequence spans 269 residues: Sororin (269 aa).

Disordered stretches follow at residues 1–39 (MSEG…IMKR), 56–110 (VNTG…PKIN), and 146–169 (SLNS…STPN). Over residues 57–66 (NTGSQSTPKV) the composition is skewed to polar residues. The short motif at 85 to 87 (KEN) is the KEN box element. Low complexity predominate over residues 146–155 (SLNSSSSLYS). Positions 180-182 (FGF) match the FGF motif motif. The C-terminal Sororin domain stretch occupies residues 247–269 (LDEWAAFMNAEFEEAEKFDLTVE).

This sequence belongs to the sororin family. In terms of assembly, interacts with the APC/C complex. Interacts with the chromatin-bound cohesin complex; the interaction is indirect, occurs after DNA replication and requires acetylation of the cohesin component smc3. Interacts (via the FGF motif) with pds5a and pds5b; the interaction is direct and prevents the interaction of pds5a with wapl. Ubiquitinated by the APC/C complex in G1, leading to its degradation.

It is found in the nucleus. It localises to the chromosome. The protein localises to the cytoplasm. Regulator of sister chromatid cohesion in mitosis stabilizing cohesin complex association with chromatin. May antagonize the action of wapl which stimulates cohesin dissociation from chromatin. Cohesion ensures that chromosome partitioning is accurate in both meiotic and mitotic cells and plays an important role in DNA repair. Required for efficient DNA double-stranded break repair. The sequence is that of Sororin (cdca5-a) from Xenopus laevis (African clawed frog).